The sequence spans 354 residues: Guanine nucleotide-binding protein G(i) subunit alpha-1 (354 aa).

Glycine 2 carries the N-myristoyl glycine lipid modification. Cysteine 3 carries the S-palmitoyl cysteine lipid modification. Residues 32–354 form the G-alpha domain; it reads REVKLLLLGA…KNNLKDCGLF (323 aa). Residues 35 to 48 are G1 motif; the sequence is KLLLLGAGESGKST. Residues 43 to 48, 150 to 151, and 175 to 178 each bind GTP; these read ESGKST, DS, and LRTR. Mg(2+) is bound at residue serine 47. The segment at 173–181 is G2 motif; the sequence is DVLRTRVKT. Residue threonine 181 coordinates Mg(2+). The tract at residues 196-205 is G3 motif; it reads FKMFDVGGQR. GTP contacts are provided by residues 200–204, 269–272, and alanine 326; these read DVGGQ and NKKD. The G4 motif stretch occupies residues 265–272; sequence ILFLNKKD. The G5 motif stretch occupies residues 324 to 329; the sequence is TCATDT.

Belongs to the G-alpha family. G(i/o/t/z) subfamily. Heterotrimeric G proteins are composed of 3 units; alpha, beta and gamma. The alpha chain contains the guanine nucleotide binding site. Part of a spindle orientation complex at least composed of GNAI1, GPSM2 and NUMA1. Identified in complex with the beta subunit GNB1 and the gamma subunit GNG1. Identified in complex with the beta subunit GNB1 and the gamma subunit GNG2. Component of the TAS2R14-GNAI1 complex, consisting of TAS2R14, GNAI1, GNB1 and GNG2; within the complex interacts with TAS2R14; this complex plays a role in the perception of bitterness. GTP binding causes dissociation of the heterotrimer, liberating the individual subunits so that they can interact with downstream effector proteins. Interacts (GDP-bound form) with GPSM1; this inhibits guanine nucleotide exchange and GTP binding. Interacts (GDP-bound form) with GPSM2 (via GoLoco domains); this inhibits guanine nucleotide exchange. Interacts with RGS10; this strongly enhances GTP hydrolysis. Interacts with RGS1 and RGS16; this strongly enhances GTPase activity. Interacts with RGS4. Interacts with RGS12. Interacts (via active GTP- or inactive GDP-bound forms) with RGS14 (via RGS and GoLoco domains). Interacts with RGS3, RGS6, RGS7, RGS8, RGS17, RGS18 and RGS20 (in vitro). Interacts (GDP-bound form) with RIC8A (via C-terminus); promoting GNAI1 folding and association with the plasma membrane. Interacts (inactive GDP-bound form) with NUCB1 (via GBA motif); the interaction leads to activation of GNAI1. Interacts (inactive GDP-bound form) with CCDC88C/DAPLE (via GBA motif); the interaction leads to activation of GNAI1. Interacts (inactive GDP-bound form) with CCDC8A/GIV (via GBA motif). Post-translationally, myristoylation at Gly-2 is required for membrane anchoring before palmitoylation. Palmitoylation at Cys-3 varies with membrane lipid composition.

The protein resides in the nucleus. It localises to the cytoplasm. It is found in the cell membrane. Its subcellular location is the cytoskeleton. The protein localises to the microtubule organizing center. The protein resides in the centrosome. It localises to the cell cortex. It is found in the membrane. It catalyses the reaction GTP + H2O = GDP + phosphate + H(+). Its function is as follows. Guanine nucleotide-binding proteins (G proteins) function as transducers downstream of G protein-coupled receptors (GPCRs) in numerous signaling cascades. The alpha chain contains the guanine nucleotide binding site and alternates between an active, GTP-bound state and an inactive, GDP-bound state. Signaling by an activated GPCR promotes GDP release and GTP binding. The alpha subunit has a low GTPase activity that converts bound GTP to GDP, thereby terminating the signal. Both GDP release and GTP hydrolysis are modulated by numerous regulatory proteins. Signaling is mediated via effector proteins, such as adenylate cyclase. Inhibits adenylate cyclase activity of ADCY1, ADCY5 and ADCY6, leading to decreased intracellular cAMP levels. The inactive GDP-bound form prevents the association of RGS14 with centrosomes and is required for the translocation of RGS14 from the cytoplasm to the plasma membrane. Required for normal cytokinesis during mitosis. Required for cortical dynein-dynactin complex recruitment during metaphase. This chain is Guanine nucleotide-binding protein G(i) subunit alpha-1 (GNAI1), found in Bos taurus (Bovine).